The sequence spans 303 residues: Ferrochelatase (303 aa).

Residues His-185 and Glu-262 each contribute to the Fe cation site.

It belongs to the ferrochelatase family.

It is found in the cytoplasm. It carries out the reaction heme b + 2 H(+) = protoporphyrin IX + Fe(2+). It participates in porphyrin-containing compound metabolism; protoheme biosynthesis; protoheme from protoporphyrin-IX: step 1/1. Its function is as follows. Catalyzes the ferrous insertion into protoporphyrin IX. This Campylobacter jejuni subsp. jejuni serotype O:2 (strain ATCC 700819 / NCTC 11168) protein is Ferrochelatase.